Reading from the N-terminus, the 826-residue chain is MATTNHVEHELLSKLIDELKVKANADPEADVLAGRLLHRLKAESVTHTVAEYLEVFSDKFYDEEFFQMHRDELETRVSAFAQSPAYERIVSSGYLSALRYYDTYLYVGRSGKQESVQHFYMRLAGFCASTTCLYAGLRAALQRARPEIESDMEVFDYYFEHLTSQTVCCSTPFMRFAGVENSTLASCILTTPDLSSEWDVTQALYRHLGRYLFQRAGVGVGVTGAGQDGKHISLLMRMINSHVEYHNYGCKRPVSVAAYMEPWHSQIFKFLETKLPENHERCPGIFTGLFVPELFFKLFRDTPWSDWYLFDPKDAGDLERLYGEEFEREYYRLVTAGKFCGRVSIKSLMFSIVNCAVKAGSPFILLKEACNAHFWRDLQGEAMNAANLCAEVLQPSRKSVATCNLANICLPRCLVNAPLAVRAQRADTQGDELLLALPRLSVTLPGEGAIGDGFSLARLRDATQCATFVVACSILQGSPTYDSRDMASMGLGVQGLADVFADLGWQYTDPPSRSLNKEIFEHMYFTALCTSSLIGLHTRKIFPGFKQSKYAGGWFHWHDWAGTDLSIPREIWSRLSERIVRDGLFNSQFIALMPTSGCAQVTGCSDAFYPFYANASTKVTNKEEALRPNRSFWRHVRLDDREALNLVGGRVSCLPEALRQRYLRFQTAFDYNQEDLIQMSRDRAPFVDQSQSHSLFLREEDAARASTLANLLVRSYELGLKTIMYYCRIEKAADLGVMECKASAALSVPREEQNERSPAEQMLPRPMEPAQVTGPVDIMSKGPGEGPGGWCVPGGLEVCYKYRQLFSEDDLLETDGFTERACESCQ.

Substrate is bound by residues threonine 171, 186–187 (SC), glycine 217, 387–391 (NLCAE), and 594–598 (PTSGC). A disulfide bond links cysteine 187 and cysteine 403. Asparagine 387 acts as the Proton acceptor in catalysis. Catalysis depends on cysteine 389, which acts as the Cysteine radical intermediate. Glutamate 391 functions as the Proton acceptor in the catalytic mechanism.

Belongs to the ribonucleoside diphosphate reductase large chain family. In terms of assembly, heterotetramer composed of a homodimer of the large subunit (R1) and a homodimer of the small subunit (R2). Larger multisubunit protein complex are also active, composed of (R1)n(R2)n.

It catalyses the reaction a 2'-deoxyribonucleoside 5'-diphosphate + [thioredoxin]-disulfide + H2O = a ribonucleoside 5'-diphosphate + [thioredoxin]-dithiol. Ribonucleoside-diphosphate reductase holoenzyme provides the precursors necessary for viral DNA synthesis. Allows virus growth in non-dividing cells, as well as reactivation from latency in infected hosts. Catalyzes the biosynthesis of deoxyribonucleotides from the corresponding ribonucleotides. In Epstein-Barr virus (strain GD1) (HHV-4), this protein is Ribonucleoside-diphosphate reductase large subunit.